We begin with the raw amino-acid sequence, 161 residues long: RNA pyrophosphohydrolase (161 aa).

A Nudix hydrolase domain is found at proline 12–lysine 154. Residues glycine 46–glycine 67 carry the Nudix box motif.

The protein belongs to the Nudix hydrolase family. RppH subfamily. It depends on a divalent metal cation as a cofactor.

Its function is as follows. Accelerates the degradation of transcripts by removing pyrophosphate from the 5'-end of triphosphorylated RNA, leading to a more labile monophosphorylated state that can stimulate subsequent ribonuclease cleavage. This chain is RNA pyrophosphohydrolase, found in Rickettsia conorii (strain ATCC VR-613 / Malish 7).